Consider the following 274-residue polypeptide: Secreted RxLR effector protein 144 (274 aa).

The signal sequence occupies residues 1 to 20 (MRPWLLLLVGLSSFFALSTS). A RxLR-dEER motif is present at residues 49-72 (RKLRAFGGDTNTLKDSGKARREEK).

This sequence belongs to the RxLR effector family.

It localises to the secreted. It is found in the host nucleus. The protein resides in the host cytoplasm. Its function is as follows. Secreted effector that completely suppresses the host cell death induced by cell death-inducing proteins. The protein is Secreted RxLR effector protein 144 of Plasmopara viticola (Downy mildew of grapevine).